Here is a 313-residue protein sequence, read N- to C-terminus: Putative S-adenosyl-L-methionine-dependent methyltransferase MUL_0706 (313 aa).

Residues Asp132 and 161–162 (DL) contribute to the S-adenosyl-L-methionine site.

It belongs to the UPF0677 family.

In terms of biological role, exhibits S-adenosyl-L-methionine-dependent methyltransferase activity. This chain is Putative S-adenosyl-L-methionine-dependent methyltransferase MUL_0706, found in Mycobacterium ulcerans (strain Agy99).